We begin with the raw amino-acid sequence, 83 residues long: Protein YciN (83 aa).

The polypeptide is Protein YciN (yciN) (Escherichia coli O157:H7).